The chain runs to 646 residues: RNA-binding protein RMD9, mitochondrial (646 aa).

A mitochondrion-targeting transit peptide spans 1–14 (MMLRRNAVRSLKTM). A propeptide spans 15 to 51 (EISVSNVVNSGSIAMLRGKLANVVLSDRTYHSSPIFH) (removed in mature form). Residues 209 to 238 (VSGYGATHLLTSFKELSFDDDCIRIWEASK) form a PPR1 repeat. The stretch at 251–282 (EPKVVGFMLPLLYAKTRSLTEPNELYNQIIQS) is one PPR2 repeat. The stretch at 288 to 317 (PNLYSGLIKVFIKAEDYEKALSLFGQLCEK) is one PPR3 repeat. The PPR4 repeat unit spans residues 323-353 (YGYLIETHLSFIGDSKNLTLAESFFDKIIND). One copy of the PPR5 repeat lies at 363–394 (VSTVNSFLQNIWKAQNDFDHVYRIWEKAVKFY). Residues 401 to 439 (GILSSLNNTFFTIFFENYINDNINGFRKLQEIITFYSGV) form a PPR6 repeat. The PPR7 repeat unit spans residues 444-473 (EPFFNVMLTRASIWHERSIIDFIDKNYTLY). One copy of the PPR8 repeat lies at 481–514 (SYRILLKSLGSIDNTNNEEILDRWLELVKKLNEL).

It belongs to the RMD9 family. As to quaternary structure, monomer. In terms of processing, phosphorylated. Phosphorylation promotes binding to RNA.

It is found in the mitochondrion inner membrane. Its function is as follows. Binds the RNA motif 5'-AAUAA[U/C]AUUCUU-3' in the 3'-UTR of mitochondrial mRNAs. Involved in the processing or stability of mitochondrial mRNAs. In Saccharomyces cerevisiae (strain ATCC 204508 / S288c) (Baker's yeast), this protein is RNA-binding protein RMD9, mitochondrial.